The primary structure comprises 494 residues: Protein translocase subunit SecD (494 aa).

6 consecutive transmembrane segments (helical) span residues 7-27 (WFAL…NLPF), 322-342 (LIAA…FYRL), 345-365 (FIAI…YALI), 372-392 (PGVA…VLIF), 420-440 (IIDG…LGTG), and 441-461 (FVKG…FTAL).

Belongs to the SecD/SecF family. SecD subfamily. In terms of assembly, forms a complex with SecF. Part of the essential Sec protein translocation apparatus which comprises SecA, SecYEG and auxiliary proteins SecDF. Other proteins may also be involved.

The protein resides in the cell inner membrane. Its function is as follows. Part of the Sec protein translocase complex. Interacts with the SecYEG preprotein conducting channel. SecDF uses the proton motive force (PMF) to complete protein translocation after the ATP-dependent function of SecA. Functionally, probably participates in protein translocation into and across both the cytoplasmic and thylakoid membranes in cyanobacterial cells. The chain is Protein translocase subunit SecD from Prochlorococcus marinus (strain SARG / CCMP1375 / SS120).